A 628-amino-acid chain; its full sequence is MSRQASKTSGGGSQGFSGRSAVVSGSSRMSCVAHSGGAGGGAYGFRSGAGGFGSRSLYNLGGNKSISISVAAGGSRAGGFGGGRSSCAFAGGYGGGFGSGYGGGFGGGFGGGRGMGGGFGGAGGFGGAGGFGGAGGFGGPGGFGGSGGFGGPGSLGSPGGFGPGGFPGGIQEVTINQSLLQPLNVEIDPQIGQVKAQEREQIKTLNNKFASFIDKVRFLEQQNKVLETKWNLLQQQGTSSISGTNNLEPLFENHINYLRSYLDNILGERGRLDSELKNMEDLVEDFKKKYEDEINKRTAAENEFVTLKKDVDSAYMNKVELQAKVDALIDEIDFLRTLYDAELSQMQSHISDTSVVLSMDNNRSLDLDSIIAEVRAQYEDIAQRSKAEAEALYQTKLGELQTTAGRHGDDLRNTKSEIIELNRMIQRLRAEIEGVKKQNANLQTAIAEAEQHGEMALKDANAKLQELQAALQQAKDDLARLLRDYQELMNVKLALDVEIATYRKLLEGEEYRMSGECPSAVSISVVSSSTTSASAGGYGGGYGGGMGGGLGGGFSAGGGSGSGFGRGGGGGIGGGFGGGSSGFSGGSGFGSISGARYGVSGGGFSSASNRGGSIKFSQSSQSSQRYSR.

The segment at 1–21 (MSRQASKTSGGGSQGFSGRSA) is disordered. The tract at residues 1–197 (MSRQASKTSG…DPQIGQVKAQ (197 aa)) is head. Phosphoserine is present on residues serine 13 and serine 56. Positions 198 to 233 (EREQIKTLNNKFASFIDKVRFLEQQNKVLETKWNLL) are coil 1A. The 316-residue stretch at 198-513 (EREQIKTLNN…KLLEGEEYRM (316 aa)) folds into the IF rod domain. A linker 1 region spans residues 234 to 254 (QQQGTSSISGTNNLEPLFENH). The segment at 255 to 346 (INYLRSYLDN…TLYDAELSQM (92 aa)) is coil 1B. At lysine 296 the chain carries N6,N6-dimethyllysine. Residues 347–370 (QSHISDTSVVLSMDNNRSLDLDSI) form a linker 12 region. A Phosphoserine modification is found at serine 364. The segment at 371-509 (IAEVRAQYED…ATYRKLLEGE (139 aa)) is coil 2. The segment at 510 to 628 (EYRMSGECPS…SSQSSQRYSR (119 aa)) is tail. The interval 605–628 (SSASNRGGSIKFSQSSQSSQRYSR) is disordered. Over residues 617 to 628 (SQSSQSSQRYSR) the composition is skewed to low complexity.

Belongs to the intermediate filament family. In terms of assembly, heterotetramer of two type I and two type II keratins. Keratin-3 associates with keratin-12. As to expression, cornea specific.

This Homo sapiens (Human) protein is Keratin, type II cytoskeletal 3 (KRT3).